The sequence spans 618 residues: Putative ATP-dependent DNA helicase Q1 (618 aa).

One can recognise a Helicase ATP-binding domain in the interval 95 to 270 (INAVMSKEDA…KKMLGIPVAI (176 aa)). An ATP-binding site is contributed by 108-115 (LSTGGGKS). The short motif at 214–217 (DEVH) is the DEVH box element. The Helicase C-terminal domain occupies 295–443 (CVEKIVRTIK…NLYNMVRYAS (149 aa)). Positions 448, 466, 470, and 473 each coordinate Zn(2+). Residues 586–618 (KGRAEENNRKRKAAVTSSDEEVDVGDDDDVITL) form a disordered region. Residues 603–618 (SDEEVDVGDDDDVITL) are compositionally biased toward acidic residues.

The protein belongs to the helicase family. RecQ subfamily. It depends on Zn(2+) as a cofactor.

Its subcellular location is the nucleus. It carries out the reaction Couples ATP hydrolysis with the unwinding of duplex DNA by translocating in the 3'-5' direction.. The enzyme catalyses ATP + H2O = ADP + phosphate + H(+). Functionally, DNA helicase that may play a role in the repair of DNA that is damaged by ultraviolet light or other mutagens. Exhibits a magnesium-dependent ATP-dependent DNA-helicase activity that unwinds single- and double-stranded DNA in a 3'-5' direction. This Caenorhabditis briggsae protein is Putative ATP-dependent DNA helicase Q1.